We begin with the raw amino-acid sequence, 142 residues long: Ctenidin-3 (142 aa).

A signal peptide spans Met-1 to Ala-19. Tyr-139 is modified (tyrosine amide).

As to expression, expressed in hemocytes (at protein level).

It is found in the secreted. Functionally, antimicrobial protein with bacteriostatic activity against the Gram-negative bacterium E.coli, and very weak activity against the Gram-positive bacterium S.aureus. Lacks activity against the yeast C.albicans. This is Ctenidin-3 from Cupiennius salei (American wandering spider).